The primary structure comprises 389 residues: Phenylpropanoylacetyl-CoA synthase (389 aa).

The active site involves Cys163.

Belongs to the thiolase-like superfamily. Chalcone/stilbene synthases family. Homodimer. In terms of tissue distribution, expressed in both the leaf and rhizome, with higher expression in the rhizome.

The enzyme catalyses (E)-feruloyl-CoA + malonyl-CoA + H(+) = (E)-feruloylacetyl-CoA + CO2 + CoA. It catalyses the reaction 4-coumaroyl-CoA + malonyl-CoA + H(+) = (4-coumaroyl)acetyl-CoA + CO2 + CoA. Its pathway is secondary metabolite biosynthesis; flavonoid biosynthesis. Functionally, catalyzes the formation of feruloyldiketide-CoA by condensing feruloyl-CoA and malonyl-CoA in the curcuminoid biosynthesis. Has no activity with cinnamoyl-CoA. In Curcuma longa (Turmeric), this protein is Phenylpropanoylacetyl-CoA synthase (DCS).